The following is a 269-amino-acid chain: Senescence-associated protein 13 (269 aa).

NADP(+) is bound at residue 21–45 (LVTGGSKGIGEAVVEELAMLGAKVH). S154 is a binding site for substrate. The Proton acceptor role is filled by Y167.

The protein belongs to the short-chain dehydrogenases/reductases (SDR) family. SDR65C subfamily.

Its function is as follows. Unspecific reductase providing both diastereomeric alcohols from the prochiral ketones. Active on cyclic monoterpenes and small flexible lipophilic carbonyls. No activity with tropinone, nitrogen-containing tropinone analogs, tropine or pseudotropine as substrate. The polypeptide is Senescence-associated protein 13 (Arabidopsis thaliana (Mouse-ear cress)).